The chain runs to 624 residues: tRNA uridine 5-carboxymethylaminomethyl modification enzyme MnmG (624 aa).

FAD is bound by residues 13–18 (GAGHAG), valine 125, and serine 180. Residue 272–286 (GPRYCPSIEDKVVKF) participates in NAD(+) binding. Glutamine 369 contacts FAD.

Belongs to the MnmG family. As to quaternary structure, homodimer. Heterotetramer of two MnmE and two MnmG subunits. Requires FAD as cofactor.

Its subcellular location is the cytoplasm. Its function is as follows. NAD-binding protein involved in the addition of a carboxymethylaminomethyl (cmnm) group at the wobble position (U34) of certain tRNAs, forming tRNA-cmnm(5)s(2)U34. The sequence is that of tRNA uridine 5-carboxymethylaminomethyl modification enzyme MnmG from Thermodesulfovibrio yellowstonii (strain ATCC 51303 / DSM 11347 / YP87).